A 258-amino-acid chain; its full sequence is Mediator of RNA polymerase II transcription subunit 7 (258 aa).

Disordered regions lie at residues Met-1–His-39 and Glu-202–Val-243. Positions Lys-203–Glu-217 are enriched in acidic residues. Residues Ser-220–Lys-229 show a composition bias toward polar residues.

The protein belongs to the Mediator complex subunit 7 family. As to quaternary structure, component of the Mediator complex.

It localises to the nucleus. Functionally, component of the Mediator complex, a coactivator involved in the regulated transcription of nearly all RNA polymerase II-dependent genes. Mediator functions as a bridge to convey information from gene-specific regulatory proteins to the basal RNA polymerase II transcription machinery. Mediator is recruited to promoters by direct interactions with regulatory proteins and serves as a scaffold for the assembly of a functional preinitiation complex with RNA polymerase II and the general transcription factors. The sequence is that of Mediator of RNA polymerase II transcription subunit 7 (let-49) from Caenorhabditis briggsae.